The chain runs to 330 residues: Alpha/beta hydrolase domain-containing protein VTE7 (330 aa).

The AB hydrolase-1 domain occupies 84-315; sequence VVLLHCFDSS…GHLPHVENPK (232 aa). S157 (nucleophile) is an active-site residue. Residues D279 and H307 each act as charge relay system in the active site.

The protein belongs to the AB hydrolase superfamily.

Its subcellular location is the plastid. It is found in the chloroplast envelope. Functionally, hydrolase involved in tocopherol (vitamin E) biosynthesis. Releases prenyl alcohols from chlorophyll biosynthetic intermediates, which are then converted to the corresponding diphosphates for tocopherol biosynthesis. Provides most of the phytol from chlorophyll for tocopherol biosynthesis in seeds. The sequence is that of Alpha/beta hydrolase domain-containing protein VTE7 from Arabidopsis thaliana (Mouse-ear cress).